Reading from the N-terminus, the 83-residue chain is MKASMFLALAGLVLLFVVGYASESEEKEFPIELLSKIFAVDVFKGEDRGCKGFGDSCTPGKNECCPNHACSNKHKWCKVYLGK.

The signal sequence occupies residues 1–21; the sequence is MKASMFLALAGLVLLFVVGYA. A propeptide spanning residues 22-48 is cleaved from the precursor; the sequence is SESEEKEFPIELLSKIFAVDVFKGEDR. Disulfide bonds link cysteine 50-cysteine 65, cysteine 57-cysteine 70, and cysteine 64-cysteine 77. Residue leucine 81 is modified to Leucine amide.

Belongs to the neurotoxin 10 (Hwtx-1) family. 15 (Hntx-3) subfamily. As to quaternary structure, monomer. As to expression, expressed by the venom gland.

Its subcellular location is the secreted. Its function is as follows. Lethal neurotoxin. Selectively blocks tetrodotoxin-sensitive voltage-gated sodium channels (Nav). Does not affect tetrodotoxin-resistant voltage-gated sodium channels or calcium channels. In Cyriopagopus hainanus (Chinese bird spider), this protein is Mu-theraphotoxin-Hhn2j 2.